We begin with the raw amino-acid sequence, 82 residues long: uncharacterized protein (82 aa).

This is an uncharacterized protein from Pigeon circovirus (PiCV).